We begin with the raw amino-acid sequence, 344 residues long: N-acetyl-gamma-glutamyl-phosphate reductase (344 aa).

Residue cysteine 148 is part of the active site.

This sequence belongs to the NAGSA dehydrogenase family. Type 1 subfamily.

It is found in the cytoplasm. It carries out the reaction N-acetyl-L-glutamate 5-semialdehyde + phosphate + NADP(+) = N-acetyl-L-glutamyl 5-phosphate + NADPH + H(+). It participates in amino-acid biosynthesis; L-arginine biosynthesis; N(2)-acetyl-L-ornithine from L-glutamate: step 3/4. In terms of biological role, catalyzes the NADPH-dependent reduction of N-acetyl-5-glutamyl phosphate to yield N-acetyl-L-glutamate 5-semialdehyde. The chain is N-acetyl-gamma-glutamyl-phosphate reductase from Geobacillus kaustophilus (strain HTA426).